A 93-amino-acid chain; its full sequence is Cobalt transport protein CbiN (93 aa).

2 helical membrane passes run 5–25 (LMLL…NHGG) and 63–83 (LLFT…LGYC).

The protein belongs to the CbiN family. As to quaternary structure, forms an energy-coupling factor (ECF) transporter complex composed of an ATP-binding protein (A component, CbiO), a transmembrane protein (T component, CbiQ) and 2 possible substrate-capture proteins (S components, CbiM and CbiN) of unknown stoichimetry.

It is found in the cell inner membrane. Its pathway is cofactor biosynthesis; adenosylcobalamin biosynthesis. In terms of biological role, part of the energy-coupling factor (ECF) transporter complex CbiMNOQ involved in cobalt import. This Salmonella paratyphi B (strain ATCC BAA-1250 / SPB7) protein is Cobalt transport protein CbiN.